The following is a 213-amino-acid chain: Holliday junction branch migration complex subunit RuvA (213 aa).

The segment at 1–69 (MISYLKGIVA…EEIPLLYGFS (69 aa)) is domain I. Residues 70-148 (SPAERDLFRH…EWRKSAGFFV (79 aa)) form a domain II region. A flexible linker region spans residues 149–158 (ATEGPAPGIL). Positions 158-213 (LEEVQMTLFALGYTAHEVSHALHVVSEDIGLPKDAYVEDWIKQAIAHLSSSEQVSH) are domain III.

This sequence belongs to the RuvA family. Homotetramer. Forms an RuvA(8)-RuvB(12)-Holliday junction (HJ) complex. HJ DNA is sandwiched between 2 RuvA tetramers; dsDNA enters through RuvA and exits via RuvB. An RuvB hexamer assembles on each DNA strand where it exits the tetramer. Each RuvB hexamer is contacted by two RuvA subunits (via domain III) on 2 adjacent RuvB subunits; this complex drives branch migration. In the full resolvosome a probable DNA-RuvA(4)-RuvB(12)-RuvC(2) complex forms which resolves the HJ.

The protein localises to the cytoplasm. Functionally, the RuvA-RuvB-RuvC complex processes Holliday junction (HJ) DNA during genetic recombination and DNA repair, while the RuvA-RuvB complex plays an important role in the rescue of blocked DNA replication forks via replication fork reversal (RFR). RuvA specifically binds to HJ cruciform DNA, conferring on it an open structure. The RuvB hexamer acts as an ATP-dependent pump, pulling dsDNA into and through the RuvAB complex. HJ branch migration allows RuvC to scan DNA until it finds its consensus sequence, where it cleaves and resolves the cruciform DNA. The protein is Holliday junction branch migration complex subunit RuvA of Nostoc sp. (strain PCC 7120 / SAG 25.82 / UTEX 2576).